We begin with the raw amino-acid sequence, 385 residues long: ATP phosphoribosyltransferase regulatory subunit (385 aa).

It belongs to the class-II aminoacyl-tRNA synthetase family. HisZ subfamily. Heteromultimer composed of HisG and HisZ subunits.

The protein resides in the cytoplasm. The protein operates within amino-acid biosynthesis; L-histidine biosynthesis; L-histidine from 5-phospho-alpha-D-ribose 1-diphosphate: step 1/9. Its function is as follows. Required for the first step of histidine biosynthesis. May allow the feedback regulation of ATP phosphoribosyltransferase activity by histidine. The protein is ATP phosphoribosyltransferase regulatory subunit of Bordetella pertussis (strain Tohama I / ATCC BAA-589 / NCTC 13251).